The chain runs to 273 residues: MIKVMVTGALGRMGSSIIKTLCENKEDYKVVGAIDVPNHPKKGIDIGELIGIGNIGAPLETADNLEKVIKETRPDVLVDFTAPAPCVNTVKIASENNVNLVVGTTGFTNEQMEEMEEIINKNNIGAVISQNYAIGVNIFFKTLELLAQKIGDYDIEIVEMHHKFKKDAPSGTALRALEIIQNNLNRDSKAIYGREGLVGERTKEEICIHALRGGDVVGDHTVIFAGDGERLELTHKASSRQAFVSGVVLAVKYIADKKDGKIYNTFDVLNLNE.

NAD(+)-binding positions include 8–13, aspartate 35, 103–105, and 129–132; these read GALGRM, GTT, and SQNY. Histidine 161 acts as the Proton donor/acceptor in catalysis. Histidine 162 is a binding site for (S)-2,3,4,5-tetrahydrodipicolinate. Catalysis depends on lysine 165, which acts as the Proton donor. 171-172 contacts (S)-2,3,4,5-tetrahydrodipicolinate; the sequence is GT.

It belongs to the DapB family.

Its subcellular location is the cytoplasm. The enzyme catalyses (S)-2,3,4,5-tetrahydrodipicolinate + NAD(+) + H2O = (2S,4S)-4-hydroxy-2,3,4,5-tetrahydrodipicolinate + NADH + H(+). It catalyses the reaction (S)-2,3,4,5-tetrahydrodipicolinate + NADP(+) + H2O = (2S,4S)-4-hydroxy-2,3,4,5-tetrahydrodipicolinate + NADPH + H(+). It participates in amino-acid biosynthesis; L-lysine biosynthesis via DAP pathway; (S)-tetrahydrodipicolinate from L-aspartate: step 4/4. Catalyzes the conversion of 4-hydroxy-tetrahydrodipicolinate (HTPA) to tetrahydrodipicolinate. In Methanococcus aeolicus (strain ATCC BAA-1280 / DSM 17508 / OCM 812 / Nankai-3), this protein is 4-hydroxy-tetrahydrodipicolinate reductase.